The primary structure comprises 189 residues: Auxin-induced protein IAA4 (189 aa).

The short motif at 8–12 is the EAR-like (transcriptional repression) element; sequence LRLGL. A PB1 domain is found at 92-179; that stretch reads GIFVKVSMDG…SCKRLRIMKG (88 aa).

Belongs to the Aux/IAA family. As to quaternary structure, homodimers and heterodimers. Phosphorylated by phytochrome A in vitro.

The protein localises to the nucleus. Its function is as follows. Aux/IAA proteins are short-lived transcriptional factors that function as repressors of early auxin response genes at low auxin concentrations. Repression is thought to result from the interaction with auxin response factors (ARFs), proteins that bind to the auxin-responsive promoter element (AuxRE). Formation of heterodimers with ARF proteins may alter their ability to modulate early auxin response genes expression. The polypeptide is Auxin-induced protein IAA4 (IAA4/5) (Pisum sativum (Garden pea)).